A 1176-amino-acid chain; its full sequence is Carbamoyl phosphate synthase arginine-specific large chain (1176 aa).

A mitochondrion-targeting transit peptide spans 1–11 (MLRSISIASRA). A carboxyphosphate synthetic domain region spans residues 70–465 (SRSPDVKKVL…SLQKAIRQVD (396 aa)). The ATP site is built by Arg-197, Arg-237, Gly-243, Gly-244, Lys-273, Leu-275, Glu-280, Gly-306, Thr-307, His-308, Gln-348, and Glu-362. The ATP-grasp 1 domain maps to 201 to 391 (VQALNEIDIP…LAYTAAKIAL (191 aa)). Residues Gln-348, Glu-362, and Asn-364 each contribute to the Mg(2+) site. Gln-348, Glu-362, and Asn-364 together coordinate Mn(2+). Residues 466–610 (PNFAGFEAYW…YTSYNATTHD (145 aa)) are oligomerization domain. The tract at residues 611 to 997 (VKFDNGTMVL…AYWAALLSVN (387 aa)) is carbamoyl phosphate synthetic domain. Positions 734–931 (SSILDSIGVD…FIDTASAAIM (198 aa)) constitute an ATP-grasp 2 domain. ATP-binding residues include Arg-770, Gln-809, Ile-811, Glu-816, Gly-841, Val-842, His-843, Ser-844, Gln-884, and Glu-902. Mg(2+) is bound by residues Gln-884, Glu-902, and Asn-904. Mn(2+) is bound by residues Gln-884, Glu-902, and Asn-904. The allosteric domain stretch occupies residues 998–1137 (GMKLPKANSG…NPIPYSEGFK (140 aa)). In terms of domain architecture, MGS-like spans 999 to 1154 (MKLPKANSGI…RDFVGEAATT (156 aa)).

The protein belongs to the CarB family. In terms of assembly, heterodimer composed of 2 chains; the small (or glutamine) chain promotes the hydrolysis of glutamine to ammonia, which is used by the large (or ammonia) chain to synthesize carbamoyl phosphate. It depends on Mg(2+) as a cofactor. The cofactor is Mn(2+).

The protein resides in the mitochondrion. The catalysed reaction is hydrogencarbonate + L-glutamine + 2 ATP + H2O = carbamoyl phosphate + L-glutamate + 2 ADP + phosphate + 2 H(+). It catalyses the reaction hydrogencarbonate + NH4(+) + 2 ATP = carbamoyl phosphate + 2 ADP + phosphate + 2 H(+). The protein operates within amino-acid biosynthesis; L-arginine biosynthesis; carbamoyl phosphate from bicarbonate: step 1/1. Its function is as follows. Large subunit of the arginine-specific carbamoyl phosphate synthase (CPSase). CPSase catalyzes the formation of carbamoyl phosphate from the ammonia moiety of glutamine, hydrogencarbonate, and phosphate donated by ATP, constituting the first step of 2 biosynthetic pathways, one leading to arginine and/or urea and the other to pyrimidine nucleotides. The large subunit (synthetase) binds the substrates ammonia (free or transferred from glutamine from the small subunit), hydrogencarbonate and ATP and carries out an ATP-coupled ligase reaction, activating hydrogencarbonate by forming carboxy phosphate which reacts with ammonia to form carbamoyl phosphate. The chain is Carbamoyl phosphate synthase arginine-specific large chain (argA) from Cutaneotrichosporon cutaneum (Yeast).